The primary structure comprises 364 residues: NAD(P)H-quinone oxidoreductase subunit 1, chloroplastic (364 aa).

6 helical membrane-spanning segments follow: residues 27-47 (IWLL…VLVI), 98-118 (FSVG…VIPF), 127-147 (ISIG…GLLM), 255-275 (GLFY…VTVL), 301-321 (VFGS…FLFV), and 337-357 (LLNL…LLTT).

The protein belongs to the complex I subunit 1 family. In terms of assembly, NDH is composed of at least 16 different subunits, 5 of which are encoded in the nucleus.

It localises to the plastid. It is found in the chloroplast thylakoid membrane. The enzyme catalyses a plastoquinone + NADH + (n+1) H(+)(in) = a plastoquinol + NAD(+) + n H(+)(out). It carries out the reaction a plastoquinone + NADPH + (n+1) H(+)(in) = a plastoquinol + NADP(+) + n H(+)(out). NDH shuttles electrons from NAD(P)H:plastoquinone, via FMN and iron-sulfur (Fe-S) centers, to quinones in the photosynthetic chain and possibly in a chloroplast respiratory chain. The immediate electron acceptor for the enzyme in this species is believed to be plastoquinone. Couples the redox reaction to proton translocation, and thus conserves the redox energy in a proton gradient. The polypeptide is NAD(P)H-quinone oxidoreductase subunit 1, chloroplastic (Illicium oligandrum (Star anise)).